The primary structure comprises 73 residues: Conotoxin Vc6.17 (73 aa).

The N-terminal stretch at 1–19 (MQKLIILLLVAAVLMSTQA) is a signal peptide. The propeptide occupies 20-44 (LFQEKRRKEKIDLLSKRKTDAEKQH). Cystine bridges form between Cys48-Cys62, Cys55-Cys66, and Cys61-Cys71.

It belongs to the conotoxin O2 superfamily. Expressed by the venom duct.

Its subcellular location is the secreted. In terms of biological role, inhibits voltage-gated ion channels. This Conus victoriae (Queen Victoria cone) protein is Conotoxin Vc6.17.